Here is a 424-residue protein sequence, read N- to C-terminus: MLDLKLLQKNPEVVAKALAMRHSDIDIATFTTLDTRRRALLTEVESLKSERNKASAEVAKAKRAGEDASALIERLGGVSERIKALDLEAEAVKSEQNDWMLTIPNIPHESVPEGRDENDNVEVLRWGTPRAFSFTPREHWDIGVALGGLDFERAGKLAGSRFTVYWKWAARLERALANYFLDTHISANGYTEVLPPFMVNRKTMTGTGQLPKFEEDLFRLESWDYFLIPTAEVPLTNLHADEILEEGDLPLGYTAQTPCFRSEAGSYGKDTRGLIRQHQFTKVEMVRFAHPERSFDELERMRGHAEALLQNLGLPYRVITLCSGDMGFSATKTYDLEVWLPGQDKYREISSCSNCGDFQARRANIRFRPAGGGKPEFVHTLNGSGLAVGRTLVAVLENYQQEDGSVIVPEVLRPYMGGLERITA.

L-serine is bound at residue 230–232 (TAE). Residue 261–263 (RSE) coordinates ATP. E284 is a binding site for L-serine. 348-351 (EISS) is a binding site for ATP. S384 lines the L-serine pocket.

It belongs to the class-II aminoacyl-tRNA synthetase family. Type-1 seryl-tRNA synthetase subfamily. Homodimer. The tRNA molecule binds across the dimer.

The protein resides in the cytoplasm. It carries out the reaction tRNA(Ser) + L-serine + ATP = L-seryl-tRNA(Ser) + AMP + diphosphate + H(+). It catalyses the reaction tRNA(Sec) + L-serine + ATP = L-seryl-tRNA(Sec) + AMP + diphosphate + H(+). The protein operates within aminoacyl-tRNA biosynthesis; selenocysteinyl-tRNA(Sec) biosynthesis; L-seryl-tRNA(Sec) from L-serine and tRNA(Sec): step 1/1. Its function is as follows. Catalyzes the attachment of serine to tRNA(Ser). Is also able to aminoacylate tRNA(Sec) with serine, to form the misacylated tRNA L-seryl-tRNA(Sec), which will be further converted into selenocysteinyl-tRNA(Sec). The protein is Serine--tRNA ligase of Nitratidesulfovibrio vulgaris (strain ATCC 29579 / DSM 644 / CCUG 34227 / NCIMB 8303 / VKM B-1760 / Hildenborough) (Desulfovibrio vulgaris).